The following is a 57-amino-acid chain: Small ribosomal subunit protein eS31 (57 aa).

Zn(2+) contacts are provided by Cys-29, Cys-32, Cys-47, and Cys-50. A C4-type zinc finger spans residues 29-50; the sequence is CSRCGKGTYMSEHKDRNTCGKC.

Belongs to the eukaryotic ribosomal protein eS31 family. In terms of assembly, part of the 30S ribosomal subunit. Requires Zn(2+) as cofactor.

The polypeptide is Small ribosomal subunit protein eS31 (Nitrosopumilus maritimus (strain SCM1)).